Consider the following 433-residue polypeptide: Dihydroorotase (433 aa).

Residues H63 and H65 each contribute to the Zn(2+) site. Substrate-binding positions include 65 to 67 (HLR) and N97. Zn(2+)-binding residues include D155, H182, and H235. Substrate is bound at residue N283. D310 lines the Zn(2+) pocket. D310 is a catalytic residue. Residue H314 participates in substrate binding.

This sequence belongs to the metallo-dependent hydrolases superfamily. DHOase family. Class I DHOase subfamily. Zn(2+) serves as cofactor.

The enzyme catalyses (S)-dihydroorotate + H2O = N-carbamoyl-L-aspartate + H(+). Its pathway is pyrimidine metabolism; UMP biosynthesis via de novo pathway; (S)-dihydroorotate from bicarbonate: step 3/3. Catalyzes the reversible cyclization of carbamoyl aspartate to dihydroorotate. This Anaeromyxobacter dehalogenans (strain 2CP-C) protein is Dihydroorotase.